The following is a 72-amino-acid chain: Translation initiation factor IF-1 (72 aa).

Residues 1-72 (MAKEDVIEVE…TRGRITYRYK (72 aa)) enclose the S1-like domain. The residue at position 60 (Tyr60) is a Phosphotyrosine.

This sequence belongs to the IF-1 family. Component of the 30S ribosomal translation pre-initiation complex which assembles on the 30S ribosome in the order IF-2 and IF-3, IF-1 and N-formylmethionyl-tRNA(fMet); mRNA recruitment can occur at any time during PIC assembly.

The protein resides in the cytoplasm. Its function is as follows. One of the essential components for the initiation of protein synthesis. Stabilizes the binding of IF-2 and IF-3 on the 30S subunit to which N-formylmethionyl-tRNA(fMet) subsequently binds. Helps modulate mRNA selection, yielding the 30S pre-initiation complex (PIC). Upon addition of the 50S ribosomal subunit IF-1, IF-2 and IF-3 are released leaving the mature 70S translation initiation complex. This Shouchella clausii (strain KSM-K16) (Alkalihalobacillus clausii) protein is Translation initiation factor IF-1.